Reading from the N-terminus, the 476-residue chain is Rifampicin monooxygenase (476 aa).

Residues Thr-12, Glu-31, Lys-32, Gln-98, Leu-122, and Thr-156 each contribute to the FAD site. 2 residues coordinate rifampicin: Arg-196 and Arg-213. 3 residues coordinate FAD: Asp-277, Leu-290, and Asn-291.

This sequence belongs to the rifampicin monooxygenase family. The cofactor is FAD.

The enzyme catalyses rifampicin + NADPH + O2 = rifampicin para-naphthoquinone carboxamide + NADP(+) + H2O + H(+). The catalysed reaction is rifampicin + NADH + O2 = rifampicin para-naphthoquinone carboxamide + NAD(+) + H2O + H(+). It carries out the reaction rifamycin SV + NADPH + O2 = rifamycin SV para-naphthoquinone carboxamide + NADP(+) + H2O. It catalyses the reaction rifamycin SV + NADH + O2 = rifamycin SV para-naphthoquinone carboxamide + NAD(+) + H2O. Monooxygenase that can modify rifampicin, thereby inactivating its antibiotic activity. Inactivates a broad range of rifamycin antibiotics. The protein is Rifampicin monooxygenase of Streptomyces venezuelae (strain ATCC 10712 / CBS 650.69 / DSM 40230 / JCM 4526 / NBRC 13096 / PD 04745).